The chain runs to 22 residues: Caerin-3.3 (22 aa).

Residue K22 is modified to Lysine amide.

In terms of tissue distribution, expressed by the skin parotoid and/or rostral glands.

Its subcellular location is the secreted. Its function is as follows. Antibacterial peptide, that adopts an alpha helical conformation which can disrupt bacterial membranes. Each caerin displays a different antimicrobial specificity. The protein is Caerin-3.3 of Ranoidea caerulea (Green tree frog).